The chain runs to 640 residues: Rab proteins geranylgeranyltransferase component A (640 aa).

Disordered stretches follow at residues 414–439 and 594–640; these read DILGDNNNNNNNNNNNNNNNNNNNNN and HNEN…EMEL. Residues 419-439 show a composition bias toward low complexity; sequence NNNNNNNNNNNNNNNNNNNNN. A compositionally biased stretch (acidic residues) spans 604–624; sequence IDSDEDEDEDINDMNDNEEED.

This sequence belongs to the Rab GDI family.

In terms of biological role, substrate-binding subunit (component A) of the Rab geranylgeranyltransferase (GGTase) complex. Binds unprenylated Rab proteins and presents the substrate peptide to the catalytic component B. The component A is thought to be regenerated by transferring its prenylated Rab back to the donor membrane. This is Rab proteins geranylgeranyltransferase component A (MRS6) from Candida albicans (Yeast).